Consider the following 227-residue polypeptide: MAYPFQLGLQDATSPIMEELLHFHDHALMIVFLISSLVLYIISLMLTTKLTHTSTMDAQEVETVWTILPAIILILIALPSLRILYMMDEINNPSLTVKTMGHQWYWSYEYTDYEDLNFDSYMIPTQELKPGELRLLEVDNRVVLPMEMTIRMLISSEDVLHSWAVPSLGLKTDAIPGRLNQTTLMAMRPGLYYGQCSEICGSNHSFMPIVLEMVPLSYFETWSALMV.

At 1 to 14 (MAYPFQLGLQDATS) the chain is on the mitochondrial intermembrane side. Residues 15-45 (PIMEELLHFHDHALMIVFLISSLVLYIISLM) traverse the membrane as a helical segment. Over 46–59 (LTTKLTHTSTMDAQ) the chain is Mitochondrial matrix. A helical transmembrane segment spans residues 60–87 (EVETVWTILPAIILILIALPSLRILYMM). At 88 to 227 (DEINNPSLTV…YFETWSALMV (140 aa)) the chain is on the mitochondrial intermembrane side. Cu cation-binding residues include H161, C196, E198, C200, H204, and M207. Residue E198 coordinates Mg(2+). Phosphotyrosine is present on Y218.

It belongs to the cytochrome c oxidase subunit 2 family. Component of the cytochrome c oxidase (complex IV, CIV), a multisubunit enzyme composed of 14 subunits. The complex is composed of a catalytic core of 3 subunits MT-CO1, MT-CO2 and MT-CO3, encoded in the mitochondrial DNA, and 11 supernumerary subunits COX4I, COX5A, COX5B, COX6A, COX6B, COX6C, COX7A, COX7B, COX7C, COX8 and NDUFA4, which are encoded in the nuclear genome. The complex exists as a monomer or a dimer and forms supercomplexes (SCs) in the inner mitochondrial membrane with NADH-ubiquinone oxidoreductase (complex I, CI) and ubiquinol-cytochrome c oxidoreductase (cytochrome b-c1 complex, complex III, CIII), resulting in different assemblies (supercomplex SCI(1)III(2)IV(1) and megacomplex MCI(2)III(2)IV(2)). Found in a complex with TMEM177, COA6, COX18, COX20, SCO1 and SCO2. Interacts with TMEM177 in a COX20-dependent manner. Interacts with COX20. Interacts with COX16. The cofactor is Cu cation.

The protein localises to the mitochondrion inner membrane. It catalyses the reaction 4 Fe(II)-[cytochrome c] + O2 + 8 H(+)(in) = 4 Fe(III)-[cytochrome c] + 2 H2O + 4 H(+)(out). Functionally, component of the cytochrome c oxidase, the last enzyme in the mitochondrial electron transport chain which drives oxidative phosphorylation. The respiratory chain contains 3 multisubunit complexes succinate dehydrogenase (complex II, CII), ubiquinol-cytochrome c oxidoreductase (cytochrome b-c1 complex, complex III, CIII) and cytochrome c oxidase (complex IV, CIV), that cooperate to transfer electrons derived from NADH and succinate to molecular oxygen, creating an electrochemical gradient over the inner membrane that drives transmembrane transport and the ATP synthase. Cytochrome c oxidase is the component of the respiratory chain that catalyzes the reduction of oxygen to water. Electrons originating from reduced cytochrome c in the intermembrane space (IMS) are transferred via the dinuclear copper A center (CU(A)) of subunit 2 and heme A of subunit 1 to the active site in subunit 1, a binuclear center (BNC) formed by heme A3 and copper B (CU(B)). The BNC reduces molecular oxygen to 2 water molecules using 4 electrons from cytochrome c in the IMS and 4 protons from the mitochondrial matrix. The protein is Cytochrome c oxidase subunit 2 (MT-CO2) of Canis aureus (Golden jackal).